The sequence spans 392 residues: Digeranylgeranylglycerophospholipid reductase (392 aa).

Residues Gly15, Glu34, Cys45, Ala46, Gly48, Arg99, Ala123, Asp279, Gly291, and Ile292 each coordinate FAD. Position 370 (Val370) interacts with a 2,3-bis-O-(geranylgeranyl)-sn-glycerol 1-phospholipid.

Belongs to the geranylgeranyl reductase family. DGGGPL reductase subfamily. FAD is required as a cofactor.

It catalyses the reaction a 2,3-bis-O-phytanyl-sn-glycerol 1-phospholipid + 8 oxidized 2[4Fe-4S]-[ferredoxin] = a 2,3-bis-O-(geranylgeranyl)-sn-glycerol 1-phospholipid + 8 reduced 2[4Fe-4S]-[ferredoxin] + 16 H(+). It carries out the reaction 2,3-bis-O-(phytanyl)-sn-glycerol 1-phosphate + 8 oxidized 2[4Fe-4S]-[ferredoxin] = 2,3-bis-O-(geranylgeranyl)-sn-glycerol 1-phosphate + 8 reduced 2[4Fe-4S]-[ferredoxin] + 16 H(+). The catalysed reaction is a 2,3-bis-O-phytanyl-sn-glycerol 1-phospholipid + 8 A = a 2,3-bis-O-(geranylgeranyl)-sn-glycerol 1-phospholipid + 8 AH2. The enzyme catalyses CDP-2,3-bis-O-(geranylgeranyl)-sn-glycerol + 8 AH2 = CDP-2,3-bis-O-(phytanyl)-sn-glycerol + 8 A. It catalyses the reaction archaetidylserine + 8 AH2 = 2,3-bis-O-phytanyl-sn-glycero-3-phospho-L-serine + 8 A. It participates in membrane lipid metabolism; glycerophospholipid metabolism. Is involved in the reduction of 2,3-digeranylgeranylglycerophospholipids (unsaturated archaeols) into 2,3-diphytanylglycerophospholipids (saturated archaeols) in the biosynthesis of archaeal membrane lipids. Catalyzes the formation of archaetidic acid (2,3-di-O-phytanyl-sn-glyceryl phosphate) from 2,3-di-O-geranylgeranylglyceryl phosphate (DGGGP) via the hydrogenation of each double bond of the isoprenoid chains. Is also probably able to reduce double bonds of geranyl groups in CDP-2,3-bis-O-(geranylgeranyl)-sn-glycerol and archaetidylserine, thus acting at various stages in the biosynthesis of archaeal membrane lipids. The sequence is that of Digeranylgeranylglycerophospholipid reductase from Methanocella arvoryzae (strain DSM 22066 / NBRC 105507 / MRE50).